A 729-amino-acid chain; its full sequence is 1,4-alpha-glucan branching enzyme GlgB 2 (729 aa).

The active-site Nucleophile is the Asp-408. Glu-461 (proton donor) is an active-site residue.

This sequence belongs to the glycosyl hydrolase 13 family. GlgB subfamily. Monomer.

It carries out the reaction Transfers a segment of a (1-&gt;4)-alpha-D-glucan chain to a primary hydroxy group in a similar glucan chain.. It participates in glycan biosynthesis; glycogen biosynthesis. Catalyzes the formation of the alpha-1,6-glucosidic linkages in glycogen by scission of a 1,4-alpha-linked oligosaccharide from growing alpha-1,4-glucan chains and the subsequent attachment of the oligosaccharide to the alpha-1,6 position. This chain is 1,4-alpha-glucan branching enzyme GlgB 2, found in Xanthomonas campestris pv. campestris (strain 8004).